Reading from the N-terminus, the 248-residue chain is Protein PIMREG (248 aa).

Residues M1–T10 are compositionally biased toward polar residues. The interval M1–V32 is disordered. 2 positions are modified to phosphoserine: S11 and S16. 2 consecutive short sequence motifs (D-box) follow at residues R14 to L17 and R53 to L56. A disordered region spans residues K117–P205. S129 carries the post-translational modification Phosphoserine. S131 carries the phosphoserine; by UHMK1; in vitro modification. Composition is skewed to polar residues over residues P132–L143 and P186–E198. A phosphoserine mark is found at S199 and S201.

In terms of assembly, isoform 1 and isoform 2 interact with PICALM; this interaction may target PICALM to the nucleus. During mitosis, associates with HDAC2 and MTA2 subunits of the chromatin-remodeling NuRD complex; this association is strongest at prometaphase and decreases as the cell progresses through metaphase and anaphase. In terms of processing, ubiquitinated by the anaphase-promoting complex/cyclosome (APC/C) complex in the presence of FZR1, leading to its degradation by the proteasome during mitotic exit. However, degradation is not essential for normal mitotic progression within a single cell cycle. Expressed in thymus (at protein level). Detected in spleen, colon, ovary and small intestines.

The protein localises to the nucleus. Its subcellular location is the nucleolus. In terms of biological role, during mitosis, may play a role in the control of metaphase-to-anaphase transition. The polypeptide is Protein PIMREG (Homo sapiens (Human)).